A 768-amino-acid polypeptide reads, in one-letter code: Cullin-3 (768 aa).

An N-acetylserine modification is found at Ser-2. Positions 2–41 (SNLSKGTGSRKDTKMRIRAFPMTMDEKYVNSIWDLLKNAI) are interaction with KLHL18. Ser-585 bears the Phosphoserine mark. The segment at 677–698 (VAAKQGESDPERKETRQKVDDD) is disordered. The span at 682-698 (GESDPERKETRQKVDDD) shows a compositional bias: basic and acidic residues. The 63-residue stretch at 698 to 760 (DRKHEIEAAI…REYLARTPED (63 aa)) folds into the Cullin neddylation domain. Lys-712 is covalently cross-linked (Glycyl lysine isopeptide (Lys-Gly) (interchain with G-Cter in NEDD8)).

Belongs to the cullin family. In terms of assembly, forms neddylation-dependent homodimers. Component of multiple BCR (BTB-CUL3-RBX1) E3 ubiquitin-protein ligase complexes formed of CUL3, RBX1 and a variable BTB domain-containing protein acting as both, adapter to cullin and substrate recognition subunit. The BCR complex may be active as a heterodimeric complex, in which NEDD8, covalently attached to one CUL3 molecule, binds to the C-terminus of a second CUL3 molecule. Interacts with RBX1, RNF7 and TIP120A/CAND1. Part of the BCR(SPOP) containing SPOP, and of BCR containing homodimeric SPOPL or the heterodimer formed by SPOP and SPOPL. Part of the probable BCR(KLHL9-KLHL13) complex with BTB domain proteins KLHL9 and KLHL13. Part of the BCR(KLHL41) complex containing KLHL41. Component of the BCR(KLHL12) E3 ubiquitin ligase complex, at least composed of CUL3 and KLHL12 and RBX1. Component of the BCR(KLHL3) E3 ubiquitin ligase complex, at least composed of CUL3 and KLHL3 and RBX1. Part of the BCR(ENC1) complex containing ENC1. Part of a complex consisting of BMI1/PCGF4, CUL3 and SPOP. Part of a complex consisting of BRMS1, CUL3 and SPOP. Component of the BCR(KLHL21) E3 ubiquitin ligase complex, at least composed of CUL3, KLHL21 and RBX1. Component of the BCR(KLHL22) E3 ubiquitin ligase complex, at least composed of CUL3, KLHL22 and RBX1. Component of the BCR(KLHL25) E3 ubiquitin ligase complex, at least composed of CUL3, KLHL25 and RBX1. Part of a complex consisting of MACROH2A1, CUL3 and SPOP. Component of the BCR(KLHL42) E3 ubiquitin ligase complex, at least composed of CUL3 and KLHL42. Component of the BCR(KBTBD8) E3 ubiquitin ligase complex, at least composed of CUL3, KBTBD8 and RBX1. Interacts with KLHL42 (via the BTB domain). Interacts with KATNA1; the interaction is enhanced by KLHL42. Interacts with KCTD5, KLHL9, KLHL11, KLHL13, GAN, ZBTB16, KLHL3, KLHL15, KLHL20, KLHL36, GMCL2, BTBD1. Part of a complex that contains CUL3, RBX1 and GAN. Interacts (via BTB domain) with KLHL17; the interaction regulates surface GRIK2 expression. Interacts with KCTD7. Part of the BCR(GAN) complex containing GAN. Part of the BCR(KEAP1) complex containing KEAP1. Interacts with KAT5 and ATF2. Interacts with KCTD17 in the BCR(KCTD17) E3 ubiquitin ligase complex, at least composed of CUL3, KCTD17 and RBX1. Interacts (when neddylated) with ARIH1; leading to activate the E3 ligase activity of ARIH1. Interacts with COPS9. Interacts with PPP2R5B; this interaction is indirect and mediated through KLHL15-binding and leads to PPP2R5B proteasomal degradation. Interacts with RBBP8/CtIP; this interaction is indirect and mediated through KLHL15-binding and leads to RBBP8 proteasomal degradation. Interacts with KLHL24 in the BCR(KLHL24) E3 ubiquitin ligase complex, composed of CUL3, RBX1 and KLHL24. Interacts with RHOBTB2. Interacts with CYCE. Interacts with KLHL10. Interacts with AURKA and KLHL18 (via BTB domain). Interacts (unneddylated form) with DCUN1D1, DCUN1D2, DCUN1D3, DCUN1D4 and DCUN1D5; these interactions promote the cullin neddylation. Component of a BCR3 (BTB-CUL3-RBX1) E3 ubiquitin ligase complex, also named Cul3-RING ubiquitin ligase complex CUL3(KBTBD6/7), composed of CUL3, RBX1, KBTBD6 and KBTBD7. Component of the BCR(KBTBD2) E3 ubiquitin ligase complex, at least composed of CUL3, KBTBD2 and RBX1. Interacts with KBTBD2 (via the BTB domain). Component of the BCR(KBTBD4) E3 ubiquitin ligase complex, at least composed of CUL3, KBTBD4 and RBX1. In terms of processing, neddylated. Attachment of NEDD8 is required for the E3 ubiquitin-protein ligase activity of the BCR complex. Deneddylated via its interaction with the COP9 signalosome (CSN) complex. In terms of tissue distribution, widely expressed, with highest expression in brain, spleen and testis. In the testis, it is mainly expressed in spermatids.

Its subcellular location is the nucleus. It localises to the golgi apparatus. The protein localises to the cell projection. The protein resides in the cilium. It is found in the flagellum. Its subcellular location is the cytoplasm. It localises to the cytoskeleton. The protein localises to the spindle. The protein resides in the microtubule organizing center. It is found in the centrosome. Its subcellular location is the spindle pole. It functions in the pathway protein modification; protein ubiquitination. Core component of multiple cullin-RING-based BCR (BTB-CUL3-RBX1) E3 ubiquitin-protein ligase complexes which mediate the ubiquitination and subsequent proteasomal degradation of target proteins. BCR complexes and ARIH1 collaborate in tandem to mediate ubiquitination of target proteins. As a scaffold protein may contribute to catalysis through positioning of the substrate and the ubiquitin-conjugating enzyme. The E3 ubiquitin-protein ligase activity of the complex is dependent on the neddylation of the cullin subunit and is inhibited by the association of the deneddylated cullin subunit with TIP120A/CAND1. The functional specificity of the BCR complex depends on the BTB domain-containing protein as the substrate recognition component. BCR(KLHL42) is involved in ubiquitination of KATNA1. BCR(SPOP) is involved in ubiquitination of BMI1/PCGF4, BRMS1, MACROH2A1 and DAXX, GLI2 and GLI3. Can also form a cullin-RING-based BCR (BTB-CUL3-RBX1) E3 ubiquitin-protein ligase complex containing homodimeric SPOPL or the heterodimer formed by SPOP and SPOPL; these complexes have lower ubiquitin ligase activity. BCR(KLHL9-KLHL13) controls the dynamic behavior of AURKB on mitotic chromosomes and thereby coordinates faithful mitotic progression and completion of cytokinesis. BCR(KLHL12) is involved in ER-Golgi transport by regulating the size of COPII coats, thereby playing a key role in collagen export, which is required for embryonic stem (ES) cells division: BCR(KLHL12) acts by mediating monoubiquitination of SEC31 (SEC31A or SEC31B). BCR(KLHL3) acts as a regulator of ion transport in the distal nephron; by mediating ubiquitination of WNK4. The BCR(KLHL20) E3 ubiquitin ligase complex is involved in interferon response and anterograde Golgi to endosome transport: it mediates both ubiquitination leading to degradation and 'Lys-33'-linked ubiquitination. The BCR(KLHL21) E3 ubiquitin ligase complex regulates localization of the chromosomal passenger complex (CPC) from chromosomes to the spindle midzone in anaphase and mediates the ubiquitination of AURKB. The BCR(KLHL22) ubiquitin ligase complex mediates monoubiquitination of PLK1, leading to PLK1 dissociation from phosphoreceptor proteins and subsequent removal from kinetochores, allowing silencing of the spindle assembly checkpoint (SAC) and chromosome segregation. The BCR(KLHL22) ubiquitin ligase complex is also responsible for the amino acid-stimulated 'Lys-48' polyubiquitination and proteasomal degradation of DEPDC5. Through the degradation of DEPDC5, releases the GATOR1 complex-mediated inhibition of the TORC1 pathway. The BCR(KLHL25) ubiquitin ligase complex is involved in translational homeostasis by mediating ubiquitination and subsequent degradation of hypophosphorylated EIF4EBP1 (4E-BP1). The BCR(KLHL25) ubiquitin ligase complex is also involved in lipid synthesis by mediating ubiquitination and degradation of ACLY. The BCR(KBTBD8) complex acts by mediating monoubiquitination of NOLC1 and TCOF1, leading to remodel the translational program of differentiating cells in favor of neural crest specification. Involved in ubiquitination of cyclin E and of cyclin D1 (in vitro) thus involved in regulation of G1/S transition. Involved in the ubiquitination of KEAP1, ENC1 and KLHL41. In concert with ATF2 and RBX1, promotes degradation of KAT5 thereby attenuating its ability to acetylate and activate ATM. The BCR(KCTD17) E3 ubiquitin ligase complex mediates ubiquitination and degradation of TCHP, a down-regulator of cilium assembly, thereby inducing ciliogenesis. The BCR(KLHL24) E3 ubiquitin ligase complex mediates ubiquitination of KRT14, controls KRT14 levels during keratinocytes differentiation, and is essential for skin integrity. The BCR(KLHL18) E3 ubiquitin ligase complex mediates the ubiquitination of AURKA leading to its activation at the centrosome which is required for initiating mitotic entry. The BCR(KEAP1) E3 ubiquitin ligase complex acts as a key sensor of oxidative and electrophilic stress by mediating ubiquitination and degradation of NFE2L2/NRF2, a transcription factor regulating expression of many cytoprotective genes. As part of the CUL3(KBTBD6/7) E3 ubiquitin ligase complex functions mediates 'Lys-48' ubiquitination and proteasomal degradation of TIAM1. By controlling the ubiquitination of that RAC1 guanine exchange factors (GEF), regulates RAC1 signal transduction and downstream biological processes including the organization of the cytoskeleton, cell migration and cell proliferation. The BCR(KBTBD4) E3 ubiquitin ligase complex targets CoREST corepressor complex components RCOR1, KDM1A/LSD1 and HDAC2 for proteasomal degradation with RCOR1 likely to be the primary target while degradation of KDM1A and HDAC2 is likely due to their association with RCOR1. It also targets RCOR3, MIER2 and MIER3 for proteasomal degradation as well as associated proteins ZNF217 and RREB1 with degradation being dependent on the presence of an ELM2 domain in the target proteins. The BCR(ARMC5) complex mediates premature transcription termination of transcripts that are unfavorably configured for transcriptional elongation by mediating ubiquitination of Pol II subunit POLR2A. Required for 'Lys-63'-linked ubiquitination of large ribosomal subunit protein MRPL12. This Mus musculus (Mouse) protein is Cullin-3 (Cul3).